Here is a 325-residue protein sequence, read N- to C-terminus: NADH-quinone oxidoreductase subunit H (325 aa).

The next 8 membrane-spanning stretches (helical) occupy residues 11–31, 81–101, 114–134, 154–174, 186–206, 237–257, 265–285, and 304–324; these read ILLT…CGAF, VIFT…FAIV, IGIL…LFAG, LSYE…AGSF, VWNV…GVAV, FFVG…TLFF, LPPF…FILI, and ICLP…LWQA.

Belongs to the complex I subunit 1 family. In terms of assembly, NDH-1 is composed of 13 different subunits. Subunits NuoA, H, J, K, L, M, N constitute the membrane sector of the complex.

The protein resides in the cell inner membrane. The enzyme catalyses a quinone + NADH + 5 H(+)(in) = a quinol + NAD(+) + 4 H(+)(out). Its function is as follows. NDH-1 shuttles electrons from NADH, via FMN and iron-sulfur (Fe-S) centers, to quinones in the respiratory chain. The immediate electron acceptor for the enzyme in this species is believed to be ubiquinone. Couples the redox reaction to proton translocation (for every two electrons transferred, four hydrogen ions are translocated across the cytoplasmic membrane), and thus conserves the redox energy in a proton gradient. This subunit may bind ubiquinone. The protein is NADH-quinone oxidoreductase subunit H of Escherichia coli O7:K1 (strain IAI39 / ExPEC).